Reading from the N-terminus, the 466-residue chain is MKTVSIFDIYLNKIKLNSKINIQGWVRNRRRSKLGLLFIDLYDGSCLYTMQVVVKDILSNYDSEISKLSVGCSINVFGVLISSIGTKQKYEIQAKVVKVIGIINNPGSYPISSKYHTMKHLRNVPHLRSRTNFFGAVSRVRNYLFNALHEFLFKNGYYWIPSPIITGLNSEGAGDMFKVSILDLNNIPKNKNGKINFKKDFFGKEAFLTVSGQLTLETYACSLSKVYSFGPIFRAENSNTRRHLSEFWMLEVETAFSNLCDIIKFSENMLKYAIGIILDKCVIDINFFRENVDEKIFCRLKDFSSKQFFQIEYKEAINILIKSNRFDHKVMFIGMELSSDHERFLVEEYFKFPLVITNYPKSLKAFYMRVNDDNKTVSAMDVLVPGVGEIIGGSEREERLNVLDRRFFELNLNKEDYWWYRDLRKYGTIPHSGFGLGFERLLSYILGIKNIRDVCPFPRTAYKADF.

This sequence belongs to the class-II aminoacyl-tRNA synthetase family. As to quaternary structure, homodimer.

Its subcellular location is the cytoplasm. It catalyses the reaction tRNA(Asn) + L-asparagine + ATP = L-asparaginyl-tRNA(Asn) + AMP + diphosphate + H(+). The chain is Asparagine--tRNA ligase from Buchnera aphidicola subsp. Baizongia pistaciae (strain Bp).